The sequence spans 1040 residues: Multidrug resistance protein MdtB (1040 aa).

The next 12 helical transmembrane spans lie at 16–36, 342–362, 369–389, 396–416, 440–460, 472–492, 537–557, 863–883, 888–908, 911–931, 968–988, and 998–1018; these read FIMR…AGII, DTQF…YLFL, IIPG…MVFL, LTLM…IVVI, IGFT…PLLF, FAVT…TLTP, WLTL…WVFI, LGST…VLGV, FIHP…ALLA, LAGS…IGIV, ILMT…STGV, and IGMV…TPVI.

It belongs to the resistance-nodulation-cell division (RND) (TC 2.A.6) family. MdtB subfamily. Part of a tripartite efflux system composed of MdtA, MdtB and MdtC. MdtB forms a heteromultimer with MdtC.

The protein localises to the cell inner membrane. This chain is Multidrug resistance protein MdtB, found in Klebsiella pneumoniae subsp. pneumoniae (strain ATCC 700721 / MGH 78578).